A 138-amino-acid chain; its full sequence is Transmembrane protein 170A (138 aa).

Topologically, residues 1–44 (MEGSEAGGGGLLQQILSLRLVPRVGNGTTYSSPLSTFPEMWYGV) are lumenal. N-linked (GlcNAc...) asparagine glycosylation occurs at Asn26. A helical membrane pass occupies residues 45-65 (FLWALVSSLSFHVPAALLALF). Over 66–79 (TLRHHKYGRFMSVS) the chain is Cytoplasmic. Residues 80–100 (LLLMGIVGPITAGILTSAAIA) traverse the membrane as a helical segment. The Lumenal portion of the chain corresponds to 101 to 110 (GVYRAAGKKM). A helical membrane pass occupies residues 111–131 (IPFEALIFEVGQTFCVVVVSF). Topologically, residues 132–138 (LRILATL) are cytoplasmic.

The protein belongs to the TMEM170 family.

The protein resides in the endoplasmic reticulum membrane. It localises to the nucleus envelope. In terms of biological role, may regulate membrane morphogenesis in the endoplasmic reticulum (ER) by promoting ER sheet formation at the expense of ER tubules. The polypeptide is Transmembrane protein 170A (TMEM170A) (Gallus gallus (Chicken)).